The chain runs to 1621 residues: Nestin (1621 aa).

M1 carries the post-translational modification N-acetylmethionine. Residues 1 to 7 (MEGCMGE) form a head region. Residues 8–43 (ESFQMWELNRRLEAYLARVKALEEQNELLSAELGGL) are coil 1A. Residues 8–313 (ESFQMWELNR…TLLEAENSRL (306 aa)) enclose the IF rod domain. The interval 44–55 (RAQSADTSWRAH) is linker 1. The interval 56 to 151 (ADDELAALRA…VAHEEERVGL (96 aa)) is coil 1B. The interval 152–173 (NAQAACAPRCPAPPRGPPAPAP) is linker 12. The coil 2A stretch occupies residues 174–192 (EVEELARRLGEAWRGAVRG). The tract at residues 193-195 (YQE) is linker 2. Residues 196 to 313 (RVAHMETSLG…TLLEAENSRL (118 aa)) form a coil 2B region. Phosphoserine is present on S311. The interval 314–1621 (QTPGGGSKTS…DRESWSSGED (1308 aa)) is tail. Position 315 is a phosphothreonine (T315). Position 325 is a phosphoserine (S325). T338 is modified (phosphothreonine). S355 and S358 each carry phosphoserine. A Phosphothreonine modification is found at T388. Phosphoserine is present on residues S398, S471, S476, S548, S564, S578, S588, S638, S680, S702, S746, and S768. The tract at residues 439 to 490 (SVLPGPEEPGGQRQEASTGQSPEDHASLAPPLSPDHSSLEAKDGESGGSRVF) is disordered. The segment at 670-788 (LEKENQEPLR…PPEKVDLEPL (119 aa)) is disordered. Basic and acidic residues-rich tracts occupy residues 687–725 (EALR…LKTL), 736–770 (LETE…RSLG), and 779–788 (PPEKVDLEPL). At S790 the chain carries Phosphoserine. K811 is covalently cross-linked (Glycyl lysine isopeptide (Lys-Gly) (interchain with G-Cter in SUMO1); alternate). K811 is covalently cross-linked (Glycyl lysine isopeptide (Lys-Gly) (interchain with G-Cter in SUMO2); alternate). Residues S820, S831, and S842 each carry the phosphoserine modification. Position 851 is a phosphothreonine (T851). S894, S905, S913, and S934 each carry phosphoserine. Residues 895 to 1593 (LGAWNLENLR…GSALKTSWAG (699 aa)) form a disordered region. 4 stretches are compositionally biased toward basic and acidic residues: residues 904–936 (RSPE…RSLE), 949–960 (QRWEDTVEKDQE), 980–994 (LNLR…KEEV), and 1012–1024 (GHPE…EQRG). Position 1016 is a phosphoserine (S1016). A compositionally biased stretch (low complexity) spans 1085–1098 (GSEPAMGESAAGAE). A compositionally biased stretch (gly residues) spans 1099-1110 (PGPGQGVGGLGD). Basic and acidic residues-rich tracts occupy residues 1129-1145 (LEAK…KDLE) and 1159-1184 (GKSR…RGAE). S1261, S1282, S1286, S1310, S1347, S1409, S1418, and S1452 each carry phosphoserine. A compositionally biased stretch (acidic residues) spans 1275-1292 (PQEEGEESREESEEDELG). The span at 1409-1428 (SDGFADEEESGEEGEEDQEE) shows a compositional bias: acidic residues. 2 stretches are compositionally biased toward low complexity: residues 1440–1453 (GSSV…SSSQ) and 1460–1470 (SDSVSVSVPWD). Positions 1486–1495 (ETESQDSAEP) are enriched in polar residues. Phosphoserine occurs at positions 1496, 1498, 1577, 1617, and 1618.

The protein belongs to the intermediate filament family. In terms of assembly, forms homodimers and homotetramers in vitro. In mixtures with other intermediate filament proteins such as vimentin and alpha-internexin, tis protein preferentially forms heterodimers which can assemble to form intermediate filaments if nestin does not exceed 25%. Interacts with FHOD3. Constitutively phosphorylated. This increases during mitosis when the cytoplasmic intermediate filament network is reorganized. CNS stem cells.

Required for brain and eye development. Promotes the disassembly of phosphorylated vimentin intermediate filaments (IF) during mitosis and may play a role in the trafficking and distribution of IF proteins and other cellular factors to daughter cells during progenitor cell division. Required for survival, renewal and mitogen-stimulated proliferation of neural progenitor cells. The chain is Nestin (NES) from Homo sapiens (Human).